An 83-amino-acid chain; its full sequence is Conotoxin p21a (83 aa).

2 positions are modified to 4-hydroxyproline; partial: P24 and P43. H83 is subject to Histidine amide.

In terms of assembly, may form a non-covalent dimer. In terms of processing, contains 5 disulfide bonds. In terms of tissue distribution, expressed by the venom duct.

Its subcellular location is the secreted. This is Conotoxin p21a from Conus purpurascens (Purple cone).